We begin with the raw amino-acid sequence, 391 residues long: Phosphoglycerate kinase (391 aa).

Residues 21 to 23 (DLN), arginine 36, 59 to 62 (HLGR), arginine 113, and arginine 146 each bind substrate. ATP contacts are provided by residues lysine 197, glutamate 319, and 345 to 348 (GGDT).

Belongs to the phosphoglycerate kinase family. Monomer.

Its subcellular location is the cytoplasm. It carries out the reaction (2R)-3-phosphoglycerate + ATP = (2R)-3-phospho-glyceroyl phosphate + ADP. It participates in carbohydrate degradation; glycolysis; pyruvate from D-glyceraldehyde 3-phosphate: step 2/5. This chain is Phosphoglycerate kinase, found in Xanthomonas axonopodis pv. citri (strain 306).